A 429-amino-acid chain; its full sequence is 3-phosphoshikimate 1-carboxyvinyltransferase (429 aa).

Positions 20, 21, and 25 each coordinate 3-phosphoshikimate. K20 contributes to the phosphoenolpyruvate binding site. 2 residues coordinate phosphoenolpyruvate: G89 and R118. Positions 164, 165, 166, 192, 311, and 338 each coordinate 3-phosphoshikimate. Q166 lines the phosphoenolpyruvate pocket. D311 functions as the Proton acceptor in the catalytic mechanism. Phosphoenolpyruvate contacts are provided by R342 and R384.

Belongs to the EPSP synthase family. Monomer.

The protein localises to the cytoplasm. The enzyme catalyses 3-phosphoshikimate + phosphoenolpyruvate = 5-O-(1-carboxyvinyl)-3-phosphoshikimate + phosphate. Its pathway is metabolic intermediate biosynthesis; chorismate biosynthesis. Functionally, catalyzes the transfer of the enolpyruvyl moiety of phosphoenolpyruvate (PEP) to the 5-hydroxyl of shikimate-3-phosphate (S3P) to produce enolpyruvyl shikimate-3-phosphate and inorganic phosphate. The sequence is that of 3-phosphoshikimate 1-carboxyvinyltransferase from Methanococcus maripaludis (strain C7 / ATCC BAA-1331).